We begin with the raw amino-acid sequence, 150 residues long: Propanediol utilization protein PduV (150 aa).

Positions 1–42 (MKRIMLIGPSQCGKTSLTQCMRGEALHYQKTQAIVWSPTTID) are targets protein to the BMC. 8-15 (GPSQCGKT) contributes to the GTP binding site.

Belongs to the EutP/PduV family. As to quaternary structure, interacts with PduU, probably via the PduU beta-barrel which is predicted by modeling to be on the exterior of the BMC.

It localises to the bacterial microcompartment. It participates in polyol metabolism; 1,2-propanediol degradation. In terms of biological role, may play a role in the spatial distribution of the bacterial microcompartment (BMC) dedicated to 1,2-PD degradation, perhaps being involved in cytoskeleton dynamics; might bind GTP. This subunit is directly targeted to the BMC. Its function is as follows. Expression of a cosmid containing the full 21-gene pdu operon in E.coli allows E.coli to grow on 1,2-propanediol (1,2-PD) with the appearance of bacterial microcompartments (BMC) in its cytoplasm. Functionally, the 1,2-PD-specific bacterial microcompartment (BMC) concentrates low levels of 1,2-PD catabolic enzymes, concentrates volatile reaction intermediates thus enhancing pathway flux and keeps the level of toxic, mutagenic propionaldehyde low. The sequence is that of Propanediol utilization protein PduV from Citrobacter freundii.